The primary structure comprises 595 residues: Pectinesterase 5 (595 aa).

An N-terminal signal peptide occupies residues 1–24 (MIGKVVVSVASILLIVGVAIGVVA). 2 N-linked (GlcNAc...) asparagine glycosylation sites follow: asparagine 86 and asparagine 206. The interval 215 to 239 (SDKGAAPVNKGTPPVADDSPVADPD) is disordered. Positions 227–239 (PPVADDSPVADPD) are enriched in low complexity. The short motif at 243-246 (RRLL) is the RRLL cleavage motif element. The short motif at 263–266 (RKLM) is the RKLM cleavage motif element. Asparagine 349 is a glycosylation site (N-linked (GlcNAc...) asparagine). Positions 360 and 390 each coordinate substrate. Catalysis depends on aspartate 413, which acts as the Proton donor. Aspartate 434 (nucleophile) is an active-site residue. 2 residues coordinate substrate: arginine 503 and tryptophan 505.

This sequence in the N-terminal section; belongs to the PMEI family. The protein in the C-terminal section; belongs to the pectinesterase family. Interacts with SBT6.1. As to expression, expressed in pollen grains and pollen tubes.

The protein localises to the cell membrane. It localises to the secreted. It is found in the cell wall. The protein resides in the golgi apparatus membrane. The enzyme catalyses [(1-&gt;4)-alpha-D-galacturonosyl methyl ester](n) + n H2O = [(1-&gt;4)-alpha-D-galacturonosyl](n) + n methanol + n H(+). The protein operates within glycan metabolism; pectin degradation; 2-dehydro-3-deoxy-D-gluconate from pectin: step 1/5. Functionally, acts in the modification of cell walls via demethylesterification of cell wall pectin. Plays an important role in growth of pollen tubes in female floral tissues, possibly via enhancing the interaction between the pollen tube and female floral tissues by modification of the cell walls. May be regulated by MYB80 during anther development and play a role in tapetum and pollen development. This is Pectinesterase 5 (PME5) from Arabidopsis thaliana (Mouse-ear cress).